Here is a 402-residue protein sequence, read N- to C-terminus: Advanced glycosylation end product-specific receptor (402 aa).

The N-terminal stretch at M1–G22 is a signal peptide. The Ig-like V-type domain maps to G23–K109. Over G23–A340 the chain is Extracellular. Residues N25 and N80 are each glycosylated (N-linked (GlcNAc...) asparagine). 2 disulfide bridges follow: C38–C98 and C143–C206. 2 consecutive Ig-like C2-type domains span residues P123–N219 and P233–S315. The tract at residues G295–G332 is disordered. The helical transmembrane segment at L341–W361 threads the bilayer. Topologically, residues R362–P402 are cytoplasmic. Residues Q365–P402 form a disordered region. 2 positions are modified to phosphoserine; by ATM: S376 and S389. Residues S376 to M394 are compositionally biased toward acidic residues.

As to quaternary structure, constitutive homodimer; disulfide-linked. Forms homooligomers. Interacts with S100A1 and APP. Interacts with S100B, S100A12 and S100A14. Interacts with TIRAP. Interacts with HMGB1. Interacts with LGP2; this interaction plays an important role in AGER-mediated pro-inflammatory responses and cytokine release. Interacts with double-strand break repair protein MRE11 which is a core component of the MRN complex; the interaction enhances MRE11 endonuclease activity and promotes DNA repair. Interacts with the MCM2-7 complex via interaction with complex member MCM2; the interaction is increased following DNA replication stress and stabilizes the MCM2-7 complex at replication forks. In terms of processing, phosphorylated on its cytoplasmic domain by PKCzeta/PRKCZ upon ligand binding. Phosphorylated by ATM following DNA damage. Post-translationally, targeted by the ubiquitin E3 ligase subunit FBXO10 to mediate its ubiquitination and degradation. Isoform 1: Expressed at higher levels in the coronary arterioles in type 2 diabetic mice (at protein level). Endothelial cells. Expressed in lung, kidney, brain and heart. Most prevalent isoform with the highest level in heart. Isoform 2: Expressed in brain, lung, kidney and small intestine with the highest level in lung. Expressed in brain, lung, kidney and small intestine with the highest level in small intestine (at protein level). Detected in neurons of the cerebrum, bronchial epithelium, endothelial cells, tubular cells of kidney and epithelial cells of small intestine (at protein level). Expression is increased in the kidney of diabetic wild-type mice (at protein level), but not in the other tissues. Expressed only in kidney. Expression is increased in the kidney of diabetic mice. Isoform 3: Expressed in lung, kidney and heart. The second most prevalent isoform with the highest level in lung. Not expressed in brain. Isoform 4: Expressed at very low level in lung only. Isoform 5: Expressed at very low level in lung only. Isoform 6: Expressed at very low level in lung only. Isoform 7: Expressed at very low level in heart only. Isoform 8: Expressed at very low level in lung only. Isoform 9: Expressed at very low level in heart only. Isoform 10: Expressed in lung, brain, heart and kidney with a very high level in kidney. Isoform 11: Expressed in brain, kidney and heart. Not expressed in lung. Isoform 12: Expressed at very low level in lung and kidney. Isoform 13: Expressed at very low level in lung only.

It is found in the cell membrane. Its subcellular location is the cell projection. It localises to the phagocytic cup. The protein resides in the early endosome. The protein localises to the nucleus. It is found in the secreted. Its function is as follows. Cell surface pattern recognition receptor that senses endogenous stress signals with a broad ligand repertoire including advanced glycation end products, S100 proteins, high-mobility group box 1 protein/HMGB1, amyloid beta/APP oligomers, nucleic acids, histones, phospholipids and glycosaminoglycans. Advanced glycosylation end products are nonenzymatically glycosylated proteins which accumulate in vascular tissue in aging and at an accelerated rate in diabetes. These ligands accumulate at inflammatory sites during the pathogenesis of various diseases including diabetes, vascular complications, neurodegenerative disorders and cancers, and RAGE transduces their binding into pro-inflammatory responses. Upon ligand binding, uses TIRAP and MYD88 as adapters to transduce the signal ultimately leading to the induction of inflammatory cytokines IL6, IL8 and TNFalpha through activation of NF-kappa-B. Interaction with S100A12 on endothelium, mononuclear phagocytes, and lymphocytes triggers cellular activation, with generation of key pro-inflammatory mediators. Interaction with S100B after myocardial infarction may play a role in myocyte apoptosis by activating ERK1/2 and p53/TP53 signaling. Contributes to the translocation of amyloid-beta peptide (ABPP) across the cell membrane from the extracellular to the intracellular space in cortical neurons. ABPP-initiated RAGE signaling, especially stimulation of p38 mitogen-activated protein kinase (MAPK), has the capacity to drive a transport system delivering ABPP as a complex with RAGE to the intraneuronal space. Participates in endothelial albumin transcytosis together with HMGB1 through the RAGE/SRC/Caveolin-1 pathway, leading to endothelial hyperpermeability. Mediates the loading of HMGB1 in extracellular vesicles (EVs) that shuttle HMGB1 to hepatocytes by transferrin-mediated endocytosis and subsequently promote hepatocyte pyroptosis by activating the NLRP3 inflammasome. Binds to DNA and promotes extracellular hypomethylated DNA (CpG DNA) uptake by cells via the endosomal route to activate inflammatory responses. Mediates phagocytosis by non-professional phagocytes (NPP) and this is enhanced by binding to ligands including RNA, DNA, HMGB1 and histones. Promotes NPP-mediated phagocytosis of Saccharomyces cerevisiae spores by binding to RNA attached to the spore wall. Also promotes NPP-mediated phagocytosis of apoptotic cells. Following DNA damage, recruited to DNA double-strand break sites where it colocalizes with the MRN repair complex via interaction with double-strand break repair protein MRE11. Enhances the endonuclease activity of MRE11, promoting the end resection of damaged DNA. Promotes DNA damage repair in trophoblasts which enhances trophoblast invasion and contributes to placental development and maintenance. Protects cells from DNA replication stress by localizing to damaged replication forks where it stabilizes the MCM2-7 complex and promotes faithful progression of the replication fork. Functionally, is able to advanced glycosylation end product (AGE)-induce nuclear factor NF-kappa-B activation. In terms of biological role, down-regulates receptor for advanced glycosylation end products (RAGE)-ligand induced signaling through various MAPK pathways including ERK1/2, p38 and SAPK/JNK. Significantly affects tumor cell properties through decreasing cell migration, invasion, adhesion and proliferation, and increasing cellular apoptosis. Exhibits drastic inhibition on tumorigenesis in vitro. In Mus musculus (Mouse), this protein is Advanced glycosylation end product-specific receptor (Ager).